The following is a 1111-amino-acid chain: RecBCD enzyme subunit RecC (1111 aa).

The protein belongs to the RecC family. In terms of assembly, heterotrimer of RecB, RecC and RecD. All subunits contribute to DNA-binding.

A helicase/nuclease that prepares dsDNA breaks (DSB) for recombinational DNA repair. Binds to DSBs and unwinds DNA via a highly rapid and processive ATP-dependent bidirectional helicase activity. Unwinds dsDNA until it encounters a Chi (crossover hotspot instigator) sequence from the 3' direction. Cuts ssDNA a few nucleotides 3' to the Chi site. The properties and activities of the enzyme are changed at Chi. The Chi-altered holoenzyme produces a long 3'-ssDNA overhang and facilitates RecA-binding to the ssDNA for homologous DNA recombination and repair. Holoenzyme degrades any linearized DNA that is unable to undergo homologous recombination. In the holoenzyme this subunit recognizes the wild-type Chi sequence, and when added to isolated RecB increases its ATP-dependent helicase processivity. The chain is RecBCD enzyme subunit RecC from Buchnera aphidicola subsp. Baizongia pistaciae (strain Bp).